The following is a 909-amino-acid chain: Protein virilizer (909 aa).

The span at 746–784 (STSKNTNTNVSKQQQQPQNSTPCSSNRFLFNKSSLISQE) shows a compositional bias: polar residues. The tract at residues 746–824 (STSKNTNTNV…TNMTRQPTTL (79 aa)) is disordered. The span at 785–799 (SNGSNNNSGTQGPGS) shows a compositional bias: low complexity. Polar residues predominate over residues 800 to 810 (MNESYSLDNSF). The segment covering 811 to 824 (NTTNTNMTRQPTTL) has biased composition (low complexity). Residues Ser-856 and Ser-898 each carry the phosphoserine modification.

This sequence belongs to the vir family. As to quaternary structure, component of the MIS (mRNA N6-methyladenosine (m6A) methylation) complex, at least composed of IME4, KAR4, MUM2, SLZ1, and VIR1. Interacts with KAR4. Interacts with SLZ1. Interacts with MUM2. Interacts with IME4.

The protein resides in the cytoplasm. The protein localises to the nucleus. It is found in the nucleolus. In terms of biological role, component of the MIS complex, a complex that mediates N6-methyladenosine (m6A) methylation of meiotic mRNAs and is required for initiation of meiosis, progression through the meiotic divisions and sporulation. In the complex, performs a scaffolding role stabilizing the other complex members. The protein is Protein virilizer of Saccharomyces cerevisiae (strain ATCC 204508 / S288c) (Baker's yeast).